The sequence spans 67 residues: Conotoxin Cl6.10 (67 aa).

The signal sequence occupies residues 1–24; the sequence is MKLTCVLIAAVLLLAVCQLDSADA. Positions 25 to 37 are excised as a propeptide; it reads TAYMRKDPSLRSP. Disulfide bonds link Cys-43/Cys-57, Cys-50/Cys-61, and Cys-56/Cys-65.

The protein belongs to the conotoxin O1 superfamily. As to expression, expressed by the venom duct.

Its subcellular location is the secreted. This chain is Conotoxin Cl6.10, found in Californiconus californicus (California cone).